We begin with the raw amino-acid sequence, 1259 residues long: Zinc finger protein BRUTUS-like At1g74770 (1259 aa).

A helical transmembrane segment spans residues 441–461; it reads LLYTSIHVLPLGLLKCVILWF. Basic and acidic residues-rich tracts occupy residues 904–916 and 924–934; these read KEEKDLERSESKK and EGDKEQTDKMS. The segment at 904–938 is disordered; sequence KEEKDLERSESKKICRGSNQEGDKEQTDKMSQKVS. The CHY-type zinc-finger motif lies at 1018 to 1087; the sequence is PHSLIFGCNH…ANCSNTSCKS (70 aa). Zn(2+)-binding residues include C1025, H1027, C1038, C1039, C1045, C1048, H1049, H1055, C1067, C1070, C1080, C1085, C1094, C1097, H1108, C1109, C1112, C1115, H1127, C1128, C1131, C1134, H1142, and C1144. A CTCHY-type zinc finger spans residues 1089–1152; that stretch reads MGKYFCKICK…VCREKCLEDN (64 aa). An RING-type; atypical zinc finger spans residues 1153–1195; it reads CPICHEYIFTSSSPVKALPCGHLMHSTCFQEYTCSHYTCPVCS.

In terms of assembly, binds zinc and iron ions.

It is found in the membrane. The protein localises to the nucleus. The protein operates within protein modification; protein ubiquitination. Probable E3 ubiquitin-protein ligase that may regulate the response to iron deficiency and thus contributes to iron homeostasis. The polypeptide is Zinc finger protein BRUTUS-like At1g74770 (Arabidopsis thaliana (Mouse-ear cress)).